A 455-amino-acid polypeptide reads, in one-letter code: Histone chaperone RTT106 (455 aa).

Serine 2 carries the N-acetylserine modification. Positions 2–67 are dimeric region; it reads SKLFLDELPE…SSDLLKTDEI (66 aa). 2 PH domains span residues 68–200 and 217–301; these read SETN…GFKI and INSF…VKRK. The interval 68 to 301 is double PH domain; the sequence is SETNTIFKLE…AKIDDYVKRK (234 aa). Residues 305–314 are compositionally biased toward basic and acidic residues; sequence DKSMSEELKA. The segment at 305–455 is disordered; the sequence is DKSMSEELKA…DEDGSGVEYD (151 aa). Residues 319-339 are compositionally biased toward polar residues; the sequence is KGQATDGTADQPSILQEATRQ. Acidic residues-rich tracts occupy residues 350 to 366 and 376 to 395; these read SDDD…ESDL and DGAE…DEEE. The span at 402-418 shows a compositional bias: polar residues; the sequence is ALNRDNSFASINGQPEQ. Phosphoserine is present on residues serine 408 and serine 411. A compositionally biased stretch (basic and acidic residues) spans 420–429; sequence LQYKEFKEPL. The segment covering 430–455 has biased composition (acidic residues); it reads ELEDIPIEIDNDDDEDDEDGSGVEYD. Serine 450 is subject to Phosphoserine.

It belongs to the RTT106 family. In terms of assembly, homodimers (via the N-terminal domain). Interacts with the SWI/SNF complex. Interacts with the RSC complex. Interacts with the HIR complex. Interacts with the CAF-1 complex. Interacts with RLF2. Interacts with SIR4. Interacts with YTA7. Interacts with CAC2. Interacts with HPC2. Interacts with HIR2. Interacts with MSI1. Interacts with HIR1. Interacts with histone H3. Interacts with histone H4.

The protein localises to the nucleus. It localises to the chromosome. Its function is as follows. Histones H3 and H4 chaperone involved in the nucleosome formation and heterochromatin silencing. Required for the deposition of H3K56ac-carrying H3-H4 complex onto newly-replicated DNA. Plays a role in the transcriptional regulation of the cell-cycle dependent histone genes by directly recruiting the SWI/SNF and RSC chromatin remodeling complexes to the histone genes in a cell cycle dependent manner. In cooperation with HIR and ASF1, creates a repressive structure at the core histone gene promoter and contributes to their repression outside of S phase. Involved in regulation of Ty1 transposition. The protein is Histone chaperone RTT106 of Saccharomyces cerevisiae (strain ATCC 204508 / S288c) (Baker's yeast).